Here is a 431-residue protein sequence, read N- to C-terminus: Serine--tRNA ligase (431 aa).

An L-serine-binding site is contributed by 236 to 238 (TAE). 267-269 (RSE) is an ATP binding site. Position 290 (E290) interacts with L-serine. Position 354 to 357 (354 to 357 (EISS)) interacts with ATP. S389 serves as a coordination point for L-serine.

This sequence belongs to the class-II aminoacyl-tRNA synthetase family. Type-1 seryl-tRNA synthetase subfamily. In terms of assembly, homodimer. The tRNA molecule binds across the dimer.

It is found in the cytoplasm. It catalyses the reaction tRNA(Ser) + L-serine + ATP = L-seryl-tRNA(Ser) + AMP + diphosphate + H(+). It carries out the reaction tRNA(Sec) + L-serine + ATP = L-seryl-tRNA(Sec) + AMP + diphosphate + H(+). It functions in the pathway aminoacyl-tRNA biosynthesis; selenocysteinyl-tRNA(Sec) biosynthesis; L-seryl-tRNA(Sec) from L-serine and tRNA(Sec): step 1/1. Catalyzes the attachment of serine to tRNA(Ser). Is also able to aminoacylate tRNA(Sec) with serine, to form the misacylated tRNA L-seryl-tRNA(Sec), which will be further converted into selenocysteinyl-tRNA(Sec). The sequence is that of Serine--tRNA ligase from Herminiimonas arsenicoxydans.